Reading from the N-terminus, the 809-residue chain is Phenylalanine--tRNA ligase beta subunit (809 aa).

The 114-residue stretch at 39-152 (KDKWPNVYVG…ADALVGMLAS (114 aa)) folds into the tRNA-binding domain. The 89-residue stretch at 404–492 (KERNGIVLSL…RIAGYHTIPC (89 aa)) folds into the B5 domain. Residues Asp-470, Asp-476, Glu-479, and Glu-480 each contribute to the Mg(2+) site. The FDX-ACB domain maps to 717–808 (NRFPAVERDL…LNTETGAVLR (92 aa)).

Belongs to the phenylalanyl-tRNA synthetase beta subunit family. Type 1 subfamily. As to quaternary structure, tetramer of two alpha and two beta subunits. Mg(2+) serves as cofactor.

The protein localises to the cytoplasm. It catalyses the reaction tRNA(Phe) + L-phenylalanine + ATP = L-phenylalanyl-tRNA(Phe) + AMP + diphosphate + H(+). The polypeptide is Phenylalanine--tRNA ligase beta subunit (Dehalococcoides mccartyi (strain CBDB1)).